The primary structure comprises 75 residues: Protein myomixer (75 aa).

Topologically, residues 1–5 (MPAVF) are cytoplasmic. Residues 6 to 28 (LLLRSLVVRLFGSRLAASGVQLL) form a helical membrane-spanning segment. At 29–75 (RRILTTATGHLGTVLRNIWERISSQQSKEAILGCVLCLLNMHKKVDN) the chain is on the extracellular side. Positions 58 to 67 (AILGCVLCLL) match the AxLyCxL motif.

Belongs to the MYMX family. In terms of tissue distribution, specifically expressed in the developing myotome.

Its subcellular location is the cell membrane. Its function is as follows. Myoblast-specific protein that mediates myoblast fusion, an essential step for the formation of multi-nucleated muscle fibers. Involved in membrane fusion downstream of the lipid mixing step mediated by mymk. Acts by generating membrane stresses via its extracellular C-terminus, leading to drive fusion pore formation. The protein is Protein myomixer of Danio rerio (Zebrafish).